We begin with the raw amino-acid sequence, 840 residues long: Probable alpha-glucuronidase A (840 aa).

The first 19 residues, 1–19, serve as a signal peptide directing secretion; sequence MRSVITTLTLVASVGLAVA. N-linked (GlcNAc...) asparagine glycans are attached at residues asparagine 222, asparagine 310, asparagine 465, asparagine 527, asparagine 576, asparagine 682, and asparagine 732.

The protein belongs to the glycosyl hydrolase 67 family.

It localises to the secreted. It carries out the reaction an alpha-D-glucuronoside + H2O = D-glucuronate + an alcohol. In terms of biological role, alpha-glucuronidase involved in the hydrolysis of xylan, a major structural heterogeneous polysaccharide found in plant biomass representing the second most abundant polysaccharide in the biosphere, after cellulose. Releases 4-O-methylglucuronic acid from xylan. In Aspergillus clavatus (strain ATCC 1007 / CBS 513.65 / DSM 816 / NCTC 3887 / NRRL 1 / QM 1276 / 107), this protein is Probable alpha-glucuronidase A (aguA).